The sequence spans 286 residues: Prepilin leader peptidase/N-methyltransferase (286 aa).

Residues 10 to 30 (FAVPLAAVLGLLVGSFLNVVI) form a helical membrane-spanning segment. Positions 70, 73, 95, and 98 each coordinate Zn(2+). 6 consecutive transmembrane segments (helical) span residues 102-122 (ISIR…LVAW), 126-146 (WSWI…LTFI), 157-177 (MTLP…FVPL), 181-201 (VLGA…YKLL), 224-244 (ISAL…AAIV), and 250-270 (GRHF…FTAN).

The protein belongs to the peptidase A24 family. The cofactor is Zn(2+).

Its subcellular location is the cell inner membrane. The enzyme catalyses Typically cleaves a -Gly-|-Phe- bond to release an N-terminal, basic peptide of 5-8 residues from type IV prepilin, and then N-methylates the new N-terminal amino group, the methyl donor being S-adenosyl-L-methionine.. Plays an essential role in type IV pili and type II pseudopili formation by proteolytically removing the leader sequence from substrate proteins and subsequently monomethylating the alpha-amino group of the newly exposed N-terminal phenylalanine. The protein is Prepilin leader peptidase/N-methyltransferase (pilD) of Neisseria gonorrhoeae.